The sequence spans 664 residues: Intraflagellar transport protein 70A2 (664 aa).

7 TPR repeats span residues D11 to S44, R45 to L78, P153 to Q186, D188 to Q220, Q395 to I423, P424 to H456, and V458 to N491. Positions Y507–D534 form a coiled coil. The stretch at C543–K576 is one TPR 8 repeat.

This sequence belongs to the TTC30/dfy-1/fleer family. Interacts wit the IFT B complex component IFT52.

It localises to the cell projection. The protein localises to the cilium. Required for polyglutamylation of axonemal tubulin. Plays a role in anterograde intraflagellar transport (IFT), the process by which cilia precursors are transported from the base of the cilium to the site of their incorporation at the tip. The protein is Intraflagellar transport protein 70A2 (Ift70a2) of Mus musculus (Mouse).